The chain runs to 404 residues: Cysteine desulfurase IscS (404 aa).

Pyridoxal 5'-phosphate contacts are provided by residues 75-76, Asn155, Gln183, and 203-205; these read AT and SGH. Residue Lys206 is modified to N6-(pyridoxal phosphate)lysine. Thr243 contacts pyridoxal 5'-phosphate. The active-site Cysteine persulfide intermediate is Cys328. Position 328 (Cys328) interacts with [2Fe-2S] cluster.

The protein belongs to the class-V pyridoxal-phosphate-dependent aminotransferase family. NifS/IscS subfamily. Homodimer. Forms a heterotetramer with IscU, interacts with other sulfur acceptors. Pyridoxal 5'-phosphate serves as cofactor.

The protein localises to the cytoplasm. The enzyme catalyses (sulfur carrier)-H + L-cysteine = (sulfur carrier)-SH + L-alanine. It participates in cofactor biosynthesis; iron-sulfur cluster biosynthesis. Master enzyme that delivers sulfur to a number of partners involved in Fe-S cluster assembly, tRNA modification or cofactor biosynthesis. Catalyzes the removal of elemental sulfur atoms from cysteine to produce alanine. Functions as a sulfur delivery protein for Fe-S cluster synthesis onto IscU, an Fe-S scaffold assembly protein, as well as other S acceptor proteins. The protein is Cysteine desulfurase IscS of Shewanella sp. (strain ANA-3).